A 291-amino-acid chain; its full sequence is Filament protein FIN1 (291 aa).

The residue at position 54 (S54) is a Phosphoserine. T68 bears the Phosphothreonine mark. A phosphoserine mark is found at S74 and S88. Residues 254 to 284 (VELKEIKDLLLQMLRRQREIESRLSNIELQL) are a coiled coil.

In terms of assembly, homooligomer; in vitro, FIN1 self-assembles into 10 nm diameter filaments. Interacts with the 14-3-3 proteins BMH1 and BMH2, and the protein phosphatase 1 complex catalytic subunit GLC7. In terms of processing, phosphorylated by CDC28. Phosphorylation is required for BMH1 and BMH2 interaction. Dephosphorylation by GLC7 depends on the presence of BMH1 and BMH2.

The protein resides in the nucleus. It is found in the cytoplasm. Its subcellular location is the cytoskeleton. The protein localises to the spindle pole. In terms of biological role, forms cell-cycle specific filaments between the spindle pole bodies of dividing yeast cells. The polypeptide is Filament protein FIN1 (FIN1) (Saccharomyces cerevisiae (strain ATCC 204508 / S288c) (Baker's yeast)).